A 322-amino-acid polypeptide reads, in one-letter code: tRNA-dihydrouridine(16) synthase (322 aa).

Residues 7-9 (PME) and glutamine 68 each bind FMN. The Proton donor role is filled by cysteine 98. Residues lysine 139, 200–202 (NGE), and 224–225 (CR) each bind FMN.

It belongs to the Dus family. DusC subfamily. FMN is required as a cofactor.

The catalysed reaction is 5,6-dihydrouridine(16) in tRNA + NADP(+) = uridine(16) in tRNA + NADPH + H(+). It carries out the reaction 5,6-dihydrouridine(16) in tRNA + NAD(+) = uridine(16) in tRNA + NADH + H(+). Its function is as follows. Catalyzes the synthesis of 5,6-dihydrouridine (D), a modified base found in the D-loop of most tRNAs, via the reduction of the C5-C6 double bond in target uridines. Specifically modifies U16 in tRNAs. This Vibrio parahaemolyticus serotype O3:K6 (strain RIMD 2210633) protein is tRNA-dihydrouridine(16) synthase.